Reading from the N-terminus, the 152-residue chain is Ribosome maturation factor RimP (152 aa).

It belongs to the RimP family.

The protein resides in the cytoplasm. Required for maturation of 30S ribosomal subunits. The sequence is that of Ribosome maturation factor RimP from Teredinibacter turnerae (strain ATCC 39867 / T7901).